The following is an 87-amino-acid chain: DNA-directed RNA polymerase subunit Rpo5 (87 aa).

This sequence belongs to the archaeal Rpo5/eukaryotic RPB5 RNA polymerase subunit family. In terms of assembly, part of the RNA polymerase complex.

The protein localises to the cytoplasm. The enzyme catalyses RNA(n) + a ribonucleoside 5'-triphosphate = RNA(n+1) + diphosphate. DNA-dependent RNA polymerase (RNAP) catalyzes the transcription of DNA into RNA using the four ribonucleoside triphosphates as substrates. The protein is DNA-directed RNA polymerase subunit Rpo5 of Thermoplasma acidophilum (strain ATCC 25905 / DSM 1728 / JCM 9062 / NBRC 15155 / AMRC-C165).